The primary structure comprises 104 residues: Iron-sulfur cluster assembly protein CyaY (104 aa).

Belongs to the frataxin family.

Its function is as follows. Involved in iron-sulfur (Fe-S) cluster assembly. May act as a regulator of Fe-S biogenesis. The protein is Iron-sulfur cluster assembly protein CyaY of Vibrio parahaemolyticus serotype O3:K6 (strain RIMD 2210633).